Here is a 232-residue protein sequence, read N- to C-terminus: Cytidylate kinase (232 aa).

19-27 (GPAGVGKTT) is a binding site for ATP.

The protein belongs to the cytidylate kinase family. Type 1 subfamily.

Its subcellular location is the cytoplasm. The enzyme catalyses CMP + ATP = CDP + ADP. It carries out the reaction dCMP + ATP = dCDP + ADP. The sequence is that of Cytidylate kinase from Nitratidesulfovibrio vulgaris (strain DP4) (Desulfovibrio vulgaris).